Consider the following 158-residue polypeptide: Crossover junction endodeoxyribonuclease RuvC (158 aa).

Active-site residues include Asp7, Glu67, and Asp140. 3 residues coordinate Mg(2+): Asp7, Glu67, and Asp140.

Belongs to the RuvC family. In terms of assembly, homodimer which binds Holliday junction (HJ) DNA. The HJ becomes 2-fold symmetrical on binding to RuvC with unstacked arms; it has a different conformation from HJ DNA in complex with RuvA. In the full resolvosome a probable DNA-RuvA(4)-RuvB(12)-RuvC(2) complex forms which resolves the HJ. Mg(2+) is required as a cofactor.

Its subcellular location is the cytoplasm. The enzyme catalyses Endonucleolytic cleavage at a junction such as a reciprocal single-stranded crossover between two homologous DNA duplexes (Holliday junction).. The RuvA-RuvB-RuvC complex processes Holliday junction (HJ) DNA during genetic recombination and DNA repair. Endonuclease that resolves HJ intermediates. Cleaves cruciform DNA by making single-stranded nicks across the HJ at symmetrical positions within the homologous arms, yielding a 5'-phosphate and a 3'-hydroxyl group; requires a central core of homology in the junction. The consensus cleavage sequence is 5'-(A/T)TT(C/G)-3'. Cleavage occurs on the 3'-side of the TT dinucleotide at the point of strand exchange. HJ branch migration catalyzed by RuvA-RuvB allows RuvC to scan DNA until it finds its consensus sequence, where it cleaves and resolves the cruciform DNA. This Dictyoglomus thermophilum (strain ATCC 35947 / DSM 3960 / H-6-12) protein is Crossover junction endodeoxyribonuclease RuvC.